Here is a 261-residue protein sequence, read N- to C-terminus: Triosephosphate isomerase (261 aa).

A substrate-binding site is contributed by Asn-10–Lys-12. Catalysis depends on His-100, which acts as the Electrophile. Glu-172 (proton acceptor) is an active-site residue. Substrate contacts are provided by residues Gly-178, Ser-218, and Gly-239 to Gly-240.

The protein belongs to the triosephosphate isomerase family. In terms of assembly, homodimer.

Its subcellular location is the cytoplasm. The catalysed reaction is D-glyceraldehyde 3-phosphate = dihydroxyacetone phosphate. It participates in carbohydrate biosynthesis; gluconeogenesis. Its pathway is carbohydrate degradation; glycolysis; D-glyceraldehyde 3-phosphate from glycerone phosphate: step 1/1. Its function is as follows. Involved in the gluconeogenesis. Catalyzes stereospecifically the conversion of dihydroxyacetone phosphate (DHAP) to D-glyceraldehyde-3-phosphate (G3P). The chain is Triosephosphate isomerase from Mycobacterium tuberculosis (strain CDC 1551 / Oshkosh).